Here is an 89-residue protein sequence, read N- to C-terminus: Microcin N (89 aa).

Positions 1–15 are cleaved as a signal peptide; that stretch reads MRELDREELNCVGGA.

This sequence belongs to the class IIa microcin family. In terms of processing, mass spectrometry suggests 3 of the 4 Met residues of the mature peptide are oxidized.

It localises to the secreted. In terms of biological role, active against E.coli and Salmonella, but not Listeria or Campylobacter. Channel-forming microcin. Probably neutralized by its immunity protein McnI. The chain is Microcin N from Escherichia coli.